Reading from the N-terminus, the 175-residue chain is ATP synthase subunit delta (175 aa).

The protein belongs to the ATPase delta chain family. As to quaternary structure, F-type ATPases have 2 components, F(1) - the catalytic core - and F(0) - the membrane proton channel. F(1) has five subunits: alpha(3), beta(3), gamma(1), delta(1), epsilon(1). F(0) has three main subunits: a(1), b(2) and c(10-14). The alpha and beta chains form an alternating ring which encloses part of the gamma chain. F(1) is attached to F(0) by a central stalk formed by the gamma and epsilon chains, while a peripheral stalk is formed by the delta and b chains.

Its subcellular location is the cell membrane. Functionally, f(1)F(0) ATP synthase produces ATP from ADP in the presence of a proton or sodium gradient. F-type ATPases consist of two structural domains, F(1) containing the extramembraneous catalytic core and F(0) containing the membrane proton channel, linked together by a central stalk and a peripheral stalk. During catalysis, ATP synthesis in the catalytic domain of F(1) is coupled via a rotary mechanism of the central stalk subunits to proton translocation. This protein is part of the stalk that links CF(0) to CF(1). It either transmits conformational changes from CF(0) to CF(1) or is implicated in proton conduction. The protein is ATP synthase subunit delta of Elusimicrobium minutum (strain Pei191).